The sequence spans 302 residues: Ribosomal RNA small subunit methyltransferase A (302 aa).

Residues His-15, Leu-17, Gly-42, Glu-64, Asp-89, and Asn-109 each coordinate S-adenosyl-L-methionine. A disordered region spans residues 275-302 (DAASADGHDHGDGSGQGESSPGGARDQI).

The protein belongs to the class I-like SAM-binding methyltransferase superfamily. rRNA adenine N(6)-methyltransferase family. RsmA subfamily.

It is found in the cytoplasm. It catalyses the reaction adenosine(1518)/adenosine(1519) in 16S rRNA + 4 S-adenosyl-L-methionine = N(6)-dimethyladenosine(1518)/N(6)-dimethyladenosine(1519) in 16S rRNA + 4 S-adenosyl-L-homocysteine + 4 H(+). In terms of biological role, specifically dimethylates two adjacent adenosines (A1518 and A1519) in the loop of a conserved hairpin near the 3'-end of 16S rRNA in the 30S particle. May play a critical role in biogenesis of 30S subunits. The chain is Ribosomal RNA small subunit methyltransferase A from Parasynechococcus marenigrum (strain WH8102).